Consider the following 341-residue polypeptide: Ketol-acid reductoisomerase (NADP(+)) (341 aa).

Positions 2 to 182 constitute a KARI N-terminal Rossmann domain; that stretch reads TDIVYDKDAD…GGLRAGGIRT (181 aa). Residues 25–28, Lys-48, Ser-51, Ser-53, and 83–86 contribute to the NADP(+) site; these read YGSQ and DQHQ. His-108 is a catalytic residue. NADP(+) is bound at residue Gly-134. In terms of domain architecture, KARI C-terminal knotted spans 183–328; that stretch reads TFTEETETDL…RELRKLFAWN (146 aa). Asp-191, Glu-195, Glu-227, and Glu-231 together coordinate Mg(2+). Ser-252 provides a ligand contact to substrate.

This sequence belongs to the ketol-acid reductoisomerase family. Requires Mg(2+) as cofactor.

It carries out the reaction (2R)-2,3-dihydroxy-3-methylbutanoate + NADP(+) = (2S)-2-acetolactate + NADPH + H(+). The catalysed reaction is (2R,3R)-2,3-dihydroxy-3-methylpentanoate + NADP(+) = (S)-2-ethyl-2-hydroxy-3-oxobutanoate + NADPH + H(+). It functions in the pathway amino-acid biosynthesis; L-isoleucine biosynthesis; L-isoleucine from 2-oxobutanoate: step 2/4. Its pathway is amino-acid biosynthesis; L-valine biosynthesis; L-valine from pyruvate: step 2/4. Its function is as follows. Involved in the biosynthesis of branched-chain amino acids (BCAA). Catalyzes an alkyl-migration followed by a ketol-acid reduction of (S)-2-acetolactate (S2AL) to yield (R)-2,3-dihydroxy-isovalerate. In the isomerase reaction, S2AL is rearranged via a Mg-dependent methyl migration to produce 3-hydroxy-3-methyl-2-ketobutyrate (HMKB). In the reductase reaction, this 2-ketoacid undergoes a metal-dependent reduction by NADPH to yield (R)-2,3-dihydroxy-isovalerate. The polypeptide is Ketol-acid reductoisomerase (NADP(+)) (Clavibacter sepedonicus (Clavibacter michiganensis subsp. sepedonicus)).